Here is a 196-residue protein sequence, read N- to C-terminus: MNVVIVDTECANLTSVRFAVERLGYSVLITDDAEQIRAADRVILPGVGTAAAAMRNLQRKQLVEPLRELTQPVLGICLGMQLLTSHSEEGDVDCLNLIPAKTKRLRDSGLPLPHMGWNTLQPTADNPLVDTSDSYCYFVHSFAVAVDEYTIASSEYGERFASMIRHNNYFGAQFHPERSGKTGEALLKRFLELTLC.

Positions 2–196 (NVVIVDTECA…LKRFLELTLC (195 aa)) constitute a Glutamine amidotransferase type-1 domain. Cys77 acts as the Nucleophile in catalysis. Catalysis depends on residues His175 and Glu177.

As to quaternary structure, heterodimer of HisH and HisF.

Its subcellular location is the cytoplasm. The enzyme catalyses 5-[(5-phospho-1-deoxy-D-ribulos-1-ylimino)methylamino]-1-(5-phospho-beta-D-ribosyl)imidazole-4-carboxamide + L-glutamine = D-erythro-1-(imidazol-4-yl)glycerol 3-phosphate + 5-amino-1-(5-phospho-beta-D-ribosyl)imidazole-4-carboxamide + L-glutamate + H(+). The catalysed reaction is L-glutamine + H2O = L-glutamate + NH4(+). The protein operates within amino-acid biosynthesis; L-histidine biosynthesis; L-histidine from 5-phospho-alpha-D-ribose 1-diphosphate: step 5/9. In terms of biological role, IGPS catalyzes the conversion of PRFAR and glutamine to IGP, AICAR and glutamate. The HisH subunit catalyzes the hydrolysis of glutamine to glutamate and ammonia as part of the synthesis of IGP and AICAR. The resulting ammonia molecule is channeled to the active site of HisF. This is Imidazole glycerol phosphate synthase subunit HisH from Idiomarina loihiensis (strain ATCC BAA-735 / DSM 15497 / L2-TR).